Here is a 226-residue protein sequence, read N- to C-terminus: NAD(P)H-hydrate epimerase (226 aa).

In terms of domain architecture, YjeF N-terminal spans 10–215; sequence AIELDLDLFE…ALQRKYQLNL (206 aa). 58–62 contributes to the (6S)-NADPHX binding site; that stretch reads NNGGD. K(+)-binding residues include asparagine 59 and aspartate 123. (6S)-NADPHX is bound by residues 127-133 and aspartate 156; that span reads GFGFKPP. Position 159 (serine 159) interacts with K(+).

It belongs to the NnrE/AIBP family. Requires K(+) as cofactor.

It carries out the reaction (6R)-NADHX = (6S)-NADHX. The enzyme catalyses (6R)-NADPHX = (6S)-NADPHX. Catalyzes the epimerization of the S- and R-forms of NAD(P)HX, a damaged form of NAD(P)H that is a result of enzymatic or heat-dependent hydration. This is a prerequisite for the S-specific NAD(P)H-hydrate dehydratase to allow the repair of both epimers of NAD(P)HX. This is NAD(P)H-hydrate epimerase from Drosophila pseudoobscura pseudoobscura (Fruit fly).